The chain runs to 329 residues: 4-hydroxythreonine-4-phosphate dehydrogenase (329 aa).

Residues His-136 and Thr-137 each contribute to the substrate site. His-166, His-211, and His-266 together coordinate a divalent metal cation. Substrate is bound by residues Lys-274, Asn-283, and Arg-292.

It belongs to the PdxA family. In terms of assembly, homodimer. Zn(2+) serves as cofactor. Mg(2+) is required as a cofactor. It depends on Co(2+) as a cofactor.

The protein localises to the cytoplasm. It catalyses the reaction 4-(phosphooxy)-L-threonine + NAD(+) = 3-amino-2-oxopropyl phosphate + CO2 + NADH. Its pathway is cofactor biosynthesis; pyridoxine 5'-phosphate biosynthesis; pyridoxine 5'-phosphate from D-erythrose 4-phosphate: step 4/5. In terms of biological role, catalyzes the NAD(P)-dependent oxidation of 4-(phosphooxy)-L-threonine (HTP) into 2-amino-3-oxo-4-(phosphooxy)butyric acid which spontaneously decarboxylates to form 3-amino-2-oxopropyl phosphate (AHAP). The chain is 4-hydroxythreonine-4-phosphate dehydrogenase from Escherichia coli (strain 55989 / EAEC).